The chain runs to 120 residues: NADH-ubiquinone oxidoreductase chain 3 (120 aa).

3 consecutive transmembrane segments (helical) span residues 10–30, 62–82, and 89–109; these read ILIL…LGYF, FYLV…LFPF, and MTLF…IGFI.

The protein belongs to the complex I subunit 3 family.

Its subcellular location is the mitochondrion membrane. The catalysed reaction is a ubiquinone + NADH + 5 H(+)(in) = a ubiquinol + NAD(+) + 4 H(+)(out). In terms of biological role, core subunit of the mitochondrial membrane respiratory chain NADH dehydrogenase (Complex I) that is believed to belong to the minimal assembly required for catalysis. Complex I functions in the transfer of electrons from NADH to the respiratory chain. The immediate electron acceptor for the enzyme is believed to be ubiquinone. In Dictyostelium citrinum (Slime mold), this protein is NADH-ubiquinone oxidoreductase chain 3 (nad3).